The chain runs to 204 residues: Wound-induced proteinase inhibitor 2 (204 aa).

Positions 1–25 (MAVPKEVSFLASLLVLGILLLHVDA) are cleaved as a signal peptide. A run of 3 repeats spans residues 25–67 (AKAC…DPNN), 68–125 (PKPC…DPNN), and 126–183 (PKPC…DPNH). Intrachain disulfides connect Cys-28–Cys-100, Cys-38–Cys-75, Cys-41–Cys-59, Cys-42–Cys-71, Cys-48–Cys-84, and Cys-99–Cys-117. One copy of the 4; truncated repeat lies at 184 to 204 (PKACPKNCDPNIAYSLCLYEK).

It belongs to the protease inhibitor I20 (potato type II proteinase inhibitor) family.

In Capsicum annuum (Capsicum pepper), this protein is Wound-induced proteinase inhibitor 2 (PIN2).